The chain runs to 40 residues: Ice-structuring protein GS-8 (40 aa).

Met1 carries the post-translational modification Blocked amino end (Met).

The protein belongs to the type-I AFP family.

Its function is as follows. Antifreeze proteins lower the blood freezing point. This Myoxocephalus aenaeus (Grubby sculpin) protein is Ice-structuring protein GS-8.